A 242-amino-acid polypeptide reads, in one-letter code: RxLR effector protein PexRD15 (242 aa).

A signal peptide spans 1-24 (MMKSLYAVNLVLLLLLAFFAPAPA). Positions 48 to 66 (RLLRAHSSDKEEQKEEEER) match the RxLR-dEER motif.

Belongs to the RxLR effector family.

It is found in the secreted. It localises to the host cell membrane. Functionally, effector that enhances P.infestans colonization of Nicotiana benthamiana leaves. This is RxLR effector protein PexRD15 from Phytophthora infestans (strain T30-4) (Potato late blight agent).